A 192-amino-acid polypeptide reads, in one-letter code: Adenylate kinase (192 aa).

Gly10–Thr15 provides a ligand contact to ATP. Positions Ser30–Val59 are NMP. Residues Thr31, Arg36, Gln57–Val59, Gly85–Arg88, and Gln92 contribute to the AMP site. An LID region spans residues Asn126 to Asp142. Arg127 contributes to the ATP binding site. AMP-binding residues include Arg139 and Arg150. Position 178 (Ala178) interacts with ATP.

It belongs to the adenylate kinase family. As to quaternary structure, monomer.

The protein localises to the cytoplasm. The enzyme catalyses AMP + ATP = 2 ADP. It functions in the pathway purine metabolism; AMP biosynthesis via salvage pathway; AMP from ADP: step 1/1. Catalyzes the reversible transfer of the terminal phosphate group between ATP and AMP. Plays an important role in cellular energy homeostasis and in adenine nucleotide metabolism. In Rhizobium meliloti (strain 1021) (Ensifer meliloti), this protein is Adenylate kinase.